The following is a 243-amino-acid chain: Large ribosomal subunit protein uL2 (243 aa).

The tract at residues 198-243 (VDHPFGGGGRQHPGKPKSVSRDTPPGRKVGDIASKRTGRGGKGGQE) is disordered. A compositionally biased stretch (basic and acidic residues) spans 221-231 (PPGRKVGDIAS).

Belongs to the universal ribosomal protein uL2 family. Part of the 50S ribosomal subunit. Forms a bridge to the 30S subunit in the 70S ribosome.

One of the primary rRNA binding proteins. Required for association of the 30S and 50S subunits to form the 70S ribosome, for tRNA binding and peptide bond formation. It has been suggested to have peptidyltransferase activity; this is somewhat controversial. Makes several contacts with the 16S rRNA in the 70S ribosome. In Natronomonas pharaonis (strain ATCC 35678 / DSM 2160 / CIP 103997 / JCM 8858 / NBRC 14720 / NCIMB 2260 / Gabara) (Halobacterium pharaonis), this protein is Large ribosomal subunit protein uL2.